Consider the following 70-residue polypeptide: ATP synthase subunit c (70 aa).

2 helical membrane passes run 4–24 (IASA…NGLI) and 47–67 (FVGV…AFMV).

Belongs to the ATPase C chain family. As to quaternary structure, F-type ATPases have 2 components, F(1) - the catalytic core - and F(0) - the membrane proton channel. F(1) has five subunits: alpha(3), beta(3), gamma(1), delta(1), epsilon(1). F(0) has three main subunits: a(1), b(2) and c(10-14). The alpha and beta chains form an alternating ring which encloses part of the gamma chain. F(1) is attached to F(0) by a central stalk formed by the gamma and epsilon chains, while a peripheral stalk is formed by the delta and b chains.

The protein resides in the cell membrane. Functionally, f(1)F(0) ATP synthase produces ATP from ADP in the presence of a proton or sodium gradient. F-type ATPases consist of two structural domains, F(1) containing the extramembraneous catalytic core and F(0) containing the membrane proton channel, linked together by a central stalk and a peripheral stalk. During catalysis, ATP synthesis in the catalytic domain of F(1) is coupled via a rotary mechanism of the central stalk subunits to proton translocation. Key component of the F(0) channel; it plays a direct role in translocation across the membrane. A homomeric c-ring of between 10-14 subunits forms the central stalk rotor element with the F(1) delta and epsilon subunits. The protein is ATP synthase subunit c of Priestia megaterium (strain ATCC 12872 / QMB1551) (Bacillus megaterium).